A 955-amino-acid chain; its full sequence is Bifunctional glutamine synthetase adenylyltransferase/adenylyl-removing enzyme (955 aa).

Positions 1–458 are adenylyl removase; the sequence is MTAQAPLSVA…QFEQTFSDKQ (458 aa). The interval 464-955 is adenylyl transferase; that stretch reads CAAIWHADLL…GSIDAASPTP (492 aa).

It belongs to the GlnE family. Mg(2+) is required as a cofactor.

It catalyses the reaction [glutamine synthetase]-O(4)-(5'-adenylyl)-L-tyrosine + phosphate = [glutamine synthetase]-L-tyrosine + ADP. The enzyme catalyses [glutamine synthetase]-L-tyrosine + ATP = [glutamine synthetase]-O(4)-(5'-adenylyl)-L-tyrosine + diphosphate. In terms of biological role, involved in the regulation of glutamine synthetase GlnA, a key enzyme in the process to assimilate ammonia. When cellular nitrogen levels are high, the C-terminal adenylyl transferase (AT) inactivates GlnA by covalent transfer of an adenylyl group from ATP to specific tyrosine residue of GlnA, thus reducing its activity. Conversely, when nitrogen levels are low, the N-terminal adenylyl removase (AR) activates GlnA by removing the adenylyl group by phosphorolysis, increasing its activity. The regulatory region of GlnE binds the signal transduction protein PII (GlnB) which indicates the nitrogen status of the cell. This is Bifunctional glutamine synthetase adenylyltransferase/adenylyl-removing enzyme from Ralstonia nicotianae (strain ATCC BAA-1114 / GMI1000) (Ralstonia solanacearum).